We begin with the raw amino-acid sequence, 1021 residues long: MGKGVGRDKYEPAAVSEHGDKKKAKKERDMDELKKEVSMDDHKLSLDELHRKYGTDLSRGLTTARAAEILARDGPNALTPPPTTPEWVKFCRQLFGGFSMLLWIGAVLCFLAYGIQAATEEEPQNDNLYLGVVLSAVVIITGCFSYYQEAKSSKIMESFKNMVPQQALVIRNGEKMSINAEEVVVGDLVEVKGGDRIPADLRIISANGCKVDNSSLTGESEPQTRSPDFTNENPLETRNIAFFSTNCVEGTARGIVVYTGDRTVMGRIATLASGLEGGQTPIAAEIEHFIHIITGVAVFLGVSFFILSLILEYTWLEAVIFLIGIIVANVPEGLLATVTVCLTLTAKRMARKNCLVKNLEAVETLGSTSTICSDKTGTLTQNRMTVAHMWFDNQIHEADTTENQSGVSFDKTSATWLALSRIAGLCNRAVFQANQDNLPILKRAVAGDASESALLKCIEVCCGSVKEMRERYTKIVEIPFNSTNKYQLSIHKNANAGEPRHLLVMKGAPERILDRCSSILIHGKEQPLDEELKDAFQNAYLELGGLGERVLGFCHLLLPDEQFPEGFQFDTDDVNFPVDNLCFVGLISMIDPPRAAVPDAVGKCRSAGIKVIMVTGDHPITAKAIAKGVGIISEGNETVEDIAARLNIPVSQVNPRDARACVVHGSDLKDMTPEQLDDILKYHTEIVFARTSPQQKLIIVEGCQRQGAIVAVTGDGVNDSPALKKADIGVAMGIAGSDVSKQAADMILLDDNFASIVTGVEEGRLIFDNLKKSIAYTLTSNIPEITPFLIFIIANIPLPLGTVTILCIDLGTDMVPAISLAYEQAESDIMKRQPRNPQTDKLVNERLISMAYGQIGMIQALGGFFTYFVIMAENGFLPNHLLGIRVTWDDRWINDVEDSYGQQWTYEQRKIVEFTCHTAFFVSIVVVQWADLVICKTRRNSVFQQGMKNKILIFGLFEETALAAFLSYCPGMGVALRMYPLKPTWWFCAFPYSLLIFVYDEVRKLIIRRRPGGWVEKETYY.

Positions 1 to 5 (MGKGV) are excised as a propeptide. Positions 1 to 11 (MGKGVGRDKYE) are enriched in basic and acidic residues. Positions 1–36 (MGKGVGRDKYEPAAVSEHGDKKKAKKERDMDELKKE) are disordered. The Cytoplasmic segment spans residues 6-85 (GRDKYEPAAV…NALTPPPTTP (80 aa)). Lys9 bears the N6-acetyllysine mark. The residue at position 10 (Tyr10) is a Phosphotyrosine. Ser16 is modified (phosphoserine; by PKC). Lys21 is modified (N6-acetyllysine). The segment covering 26–36 (KERDMDELKKE) has biased composition (basic and acidic residues). Phosphoserine is present on residues Ser38 and Ser45. The interval 80–82 (PPP) is phosphoinositide-3 kinase binding. Residues 86–106 (EWVKFCRQLFGGFSMLLWIGA) traverse the membrane as a helical segment. The Extracellular portion of the chain corresponds to 107–129 (VLCFLAYGIQAATEEEPQNDNLY). Residues 130–150 (LGVVLSAVVIITGCFSYYQEA) traverse the membrane as a helical segment. Residues 151–286 (KSSKIMESFK…GGQTPIAAEI (136 aa)) are Cytoplasmic-facing. Ser226 is modified (phosphoserine). Tyr258 is modified (phosphotyrosine). Residues 287 to 306 (EHFIHIITGVAVFLGVSFFI) form a helical membrane-spanning segment. The Extracellular portion of the chain corresponds to 307 to 318 (LSLILEYTWLEA). Residues 319–336 (VIFLIGIIVANVPEGLLA) form a helical membrane-spanning segment. At 337–770 (TVTVCLTLTA…EEGRLIFDNL (434 aa)) the chain is on the cytoplasmic side. Catalysis depends on Asp374, which acts as the 4-aspartylphosphate intermediate. Phosphoserine occurs at positions 450 and 482. ATP is bound at residue Lys485. Tyr540 is subject to Phosphotyrosine. The tract at residues 594–715 (RAAVPDAVGK…QGAIVAVTGD (122 aa)) is mediates interaction with SCN7A. Phosphoserine is present on Ser666. Residues Asp715 and Asp719 each coordinate Mg(2+). Residues 771-790 (KKSIAYTLTSNIPEITPFLI) form a helical membrane-spanning segment. The Extracellular portion of the chain corresponds to 791–800 (FIIANIPLPL). The chain crosses the membrane as a helical span at residues 801-821 (GTVTILCIDLGTDMVPAISLA). Residues 822–841 (YEQAESDIMKRQPRNPQTDK) are Cytoplasmic-facing. Residues 842–864 (LVNERLISMAYGQIGMIQALGGF) traverse the membrane as a helical segment. Topologically, residues 865–916 (FTYFVIMAENGFLPNHLLGIRVTWDDRWINDVEDSYGQQWTYEQRKIVEFTC) are extracellular. Residues 917–936 (HTAFFVSIVVVQWADLVICK) form a helical membrane-spanning segment. Topologically, residues 937–949 (TRRNSVFQQGMKN) are cytoplasmic. At Ser941 the chain carries Phosphoserine; by PKA. Residues 950–968 (KILIFGLFEETALAAFLSY) form a helical membrane-spanning segment. Topologically, residues 969–983 (CPGMGVALRMYPLKP) are extracellular. Residues 984–1004 (TWWFCAFPYSLLIFVYDEVRK) traverse the membrane as a helical segment. The Cytoplasmic portion of the chain corresponds to 1005–1021 (LIIRRRPGGWVEKETYY).

This sequence belongs to the cation transport ATPase (P-type) (TC 3.A.3) family. Type IIC subfamily. In terms of assembly, the sodium/potassium-transporting ATPase is composed of a catalytic alpha subunit, an auxiliary non-catalytic beta subunit and an additional regulatory subunit. Interacts with regulatory subunit FXYD1. Interacts with regulatory subunit FXYD3. Interacts with SIK1. Interacts with SLC35G1 and STIM1. Interacts with CLN3; this interaction regulates the sodium/potassium-transporting ATPase complex localization at the plasma membrane. Interacts with SCN7A; activates ATP1A1 P-type sodium:potassium-exchanging transporter activity which indirectly signals to nearby neurons to regulate sodium homeostasis. In terms of processing, phosphorylation on Tyr-10 modulates pumping activity. Phosphorylation of Ser-941 by PKA modulates the response of ATP1A1 to PKC. Dephosphorylation by protein phosphatase 2A (PP2A) following increases in intracellular sodium, leading to increase catalytic activity.

It localises to the cell membrane. The protein localises to the basolateral cell membrane. The protein resides in the sarcolemma. It is found in the cell projection. Its subcellular location is the axon. It localises to the melanosome. The enzyme catalyses K(+)(out) + Na(+)(in) + ATP + H2O = K(+)(in) + Na(+)(out) + ADP + phosphate + H(+). Its function is as follows. This is the catalytic component of the active enzyme, which catalyzes the hydrolysis of ATP coupled with the exchange of sodium and potassium ions across the plasma membrane. This action creates the electrochemical gradient of sodium and potassium ions, providing the energy for active transport of various nutrients. Could also be part of an osmosensory signaling pathway that senses body-fluid sodium levels and controls salt intake behavior as well as voluntary water intake to regulate sodium homeostasis. In Bos taurus (Bovine), this protein is Sodium/potassium-transporting ATPase subunit alpha-1 (ATP1A1).